A 149-amino-acid polypeptide reads, in one-letter code: Deoxyuridine 5'-triphosphate nucleotidohydrolase (149 aa).

Substrate is bound by residues 65-67 (RSG), Asn-78, 82-84 (TID), and Lys-92.

Belongs to the dUTPase family. The cofactor is Mg(2+).

The enzyme catalyses dUTP + H2O = dUMP + diphosphate + H(+). It participates in pyrimidine metabolism; dUMP biosynthesis; dUMP from dCTP (dUTP route): step 2/2. Its function is as follows. This enzyme is involved in nucleotide metabolism: it produces dUMP, the immediate precursor of thymidine nucleotides and it decreases the intracellular concentration of dUTP so that uracil cannot be incorporated into DNA. This chain is Deoxyuridine 5'-triphosphate nucleotidohydrolase, found in Chlorobium chlorochromatii (strain CaD3).